A 151-amino-acid polypeptide reads, in one-letter code: Large ribosomal subunit protein uL15 (151 aa).

The interval Met1 to Thr51 is disordered. A compositionally biased stretch (gly residues) spans Arg23 to Ala33.

This sequence belongs to the universal ribosomal protein uL15 family. Part of the 50S ribosomal subunit.

In terms of biological role, binds to the 23S rRNA. The polypeptide is Large ribosomal subunit protein uL15 (Petrotoga mobilis (strain DSM 10674 / SJ95)).